A 232-amino-acid polypeptide reads, in one-letter code: Large ribosomal subunit protein uL1 (232 aa).

The protein belongs to the universal ribosomal protein uL1 family. Part of the 50S ribosomal subunit.

Its function is as follows. Binds directly to 23S rRNA. The L1 stalk is quite mobile in the ribosome, and is involved in E site tRNA release. Functionally, protein L1 is also a translational repressor protein, it controls the translation of the L11 operon by binding to its mRNA. This Pelotomaculum thermopropionicum (strain DSM 13744 / JCM 10971 / SI) protein is Large ribosomal subunit protein uL1.